A 359-amino-acid chain; its full sequence is Alanine racemase, biosynthetic (359 aa).

Lysine 34 acts as the Proton acceptor; specific for D-alanine in catalysis. Lysine 34 carries the N6-(pyridoxal phosphate)lysine modification. Arginine 129 lines the substrate pocket. The active-site Proton acceptor; specific for L-alanine is tyrosine 255. Methionine 303 provides a ligand contact to substrate.

The protein belongs to the alanine racemase family. Monomer but homodimer in the presence of the substrate. Pyridoxal 5'-phosphate is required as a cofactor.

The catalysed reaction is L-alanine = D-alanine. Its pathway is amino-acid biosynthesis; D-alanine biosynthesis; D-alanine from L-alanine: step 1/1. The protein operates within cell wall biogenesis; peptidoglycan biosynthesis. Catalyzes the interconversion of L-alanine and D-alanine. In Shigella sonnei, this protein is Alanine racemase, biosynthetic (alr).